A 61-amino-acid chain; its full sequence is Metallothionein-2B (61 aa).

Methionine 1 bears the N-acetylmethionine mark. The beta stretch occupies residues 1 to 29; sequence MDPNCSCATGDSCTCASSCKCKECKCTSC. A divalent metal cation contacts are provided by cysteine 5, cysteine 7, cysteine 13, cysteine 15, cysteine 19, cysteine 21, cysteine 24, cysteine 26, cysteine 29, cysteine 33, cysteine 34, cysteine 36, cysteine 37, cysteine 41, cysteine 44, cysteine 48, cysteine 50, cysteine 57, cysteine 59, and cysteine 60. An alpha region spans residues 30–61; the sequence is KKSCCSCCPAGCTKCAQGCICKGASDKCSCCA.

It belongs to the metallothionein superfamily. Type 1 family. Monomer.

In terms of biological role, metallothioneins have a high content of cysteine residues that bind various heavy metals; these proteins are transcriptionally regulated by both heavy metals and glucocorticoids. This Oryctolagus cuniculus (Rabbit) protein is Metallothionein-2B.